We begin with the raw amino-acid sequence, 423 residues long: MNILQNLKKSDPIISNLINSEKNRQETHLELIASENFASMAVMQAQGSVLTNKYAEGLPQKRYYGGCEFVDEIEELAIERAKQLFDADWANVQPHSGAQANAAVFLSLLNPGDTILGMDLSHGGHLTHGSPVNMSGKWFNAVHYGVDKETNKLNFNVIRDIALATKPKLIICGYSAYPRTIDFKSFRSIADEVGAFLMADIAHIAGLVASKLHPNPIPYCDVVTTTTHKTLRGPRGGLILCKDKEFGKKFDKSVFPGTQGGPLEHIIAAKAVAFGEALQPNFVNYSKQVIKNAKVLSSTLINRGIDIVSGGTDNHIVLLDLRSINMTGKVADLLVSEVNITANKNTVPFDPESPFVTSGLRLGTAALTTRGFNDEAFIEVGEIIADRLLNPDDLLIEKECKERVLSLCNSFPLYEAKLESSIK.

(6S)-5,6,7,8-tetrahydrofolate-binding positions include Leu-120 and Gly-124 to Leu-126. Lys-229 carries the N6-(pyridoxal phosphate)lysine modification. Position 353–355 (Ser-353–Phe-355) interacts with (6S)-5,6,7,8-tetrahydrofolate.

The protein belongs to the SHMT family. In terms of assembly, homodimer. Pyridoxal 5'-phosphate is required as a cofactor.

Its subcellular location is the cytoplasm. It carries out the reaction (6R)-5,10-methylene-5,6,7,8-tetrahydrofolate + glycine + H2O = (6S)-5,6,7,8-tetrahydrofolate + L-serine. Its pathway is one-carbon metabolism; tetrahydrofolate interconversion. It functions in the pathway amino-acid biosynthesis; glycine biosynthesis; glycine from L-serine: step 1/1. Its function is as follows. Catalyzes the reversible interconversion of serine and glycine with tetrahydrofolate (THF) serving as the one-carbon carrier. This reaction serves as the major source of one-carbon groups required for the biosynthesis of purines, thymidylate, methionine, and other important biomolecules. Also exhibits THF-independent aldolase activity toward beta-hydroxyamino acids, producing glycine and aldehydes, via a retro-aldol mechanism. This chain is Serine hydroxymethyltransferase, found in Prochlorococcus marinus (strain MIT 9515).